Consider the following 368-residue polypeptide: Cytochrome b (368 aa).

4 consecutive transmembrane segments (helical) span residues phenylalanine 32–phenylalanine 52, tryptophan 76–threonine 98, alanine 112–valine 132, and phenylalanine 174–phenylalanine 194. Heme b is bound by residues histidine 82 and histidine 96. Residues histidine 178 and histidine 192 each contribute to the heme b site. Residue histidine 197 coordinates a ubiquinone. 4 helical membrane-spanning segments follow: residues methionine 219 to alanine 239, glycine 285 to leucine 305, glycine 323 to proline 343, and tyrosine 347 to leucine 367.

This sequence belongs to the cytochrome b family. The main subunits of complex b-c1 are: cytochrome b, cytochrome c1 and the Rieske protein. It depends on heme b as a cofactor.

It localises to the mitochondrion inner membrane. Its function is as follows. Component of the ubiquinol-cytochrome c reductase complex (complex III or cytochrome b-c1 complex) that is part of the mitochondrial respiratory chain. The b-c1 complex mediates electron transfer from ubiquinol to cytochrome c. Contributes to the generation of a proton gradient across the mitochondrial membrane that is then used for ATP synthesis. This is Cytochrome b (MT-CYB) from Toxoplasma gondii.